Consider the following 414-residue polypeptide: Coenzyme A biosynthesis bifunctional protein CoaBC (414 aa).

The phosphopantothenoylcysteine decarboxylase stretch occupies residues 1-191 (MSARKRIVVG…ALPYDMAGVK (191 aa)). The tract at residues 192-414 (ALVTAGGTRE…IAAFLKSQDG (223 aa)) is phosphopantothenate--cysteine ligase. CTP is bound by residues 275 to 277 (MAA), D281, K291, 293 to 294 (KK), 308 to 311 (DDVL), F332, K350, and K354.

The protein in the N-terminal section; belongs to the HFCD (homo-oligomeric flavin containing Cys decarboxylase) superfamily. It in the C-terminal section; belongs to the PPC synthetase family. Homododecamer. It depends on Mg(2+) as a cofactor. FMN is required as a cofactor.

The catalysed reaction is N-[(R)-4-phosphopantothenoyl]-L-cysteine + H(+) = (R)-4'-phosphopantetheine + CO2. The enzyme catalyses (R)-4'-phosphopantothenate + L-cysteine + CTP = N-[(R)-4-phosphopantothenoyl]-L-cysteine + CMP + diphosphate + H(+). The protein operates within cofactor biosynthesis; coenzyme A biosynthesis; CoA from (R)-pantothenate: step 2/5. It participates in cofactor biosynthesis; coenzyme A biosynthesis; CoA from (R)-pantothenate: step 3/5. Two related chemical scaffolds that potently inhibit the activity of the CoaB moiety of CoaBC through a cryptic allosteric site that sits in the dimer interface region of the CoaB enzyme were identified. Its function is as follows. Catalyzes two sequential steps in the biosynthesis of coenzyme A. In the first step cysteine is conjugated to 4'-phosphopantothenate to form 4-phosphopantothenoylcysteine. In the second step the latter compound is decarboxylated to form 4'-phosphopantotheine. The protein is Coenzyme A biosynthesis bifunctional protein CoaBC of Mycolicibacterium smegmatis (strain ATCC 700084 / mc(2)155) (Mycobacterium smegmatis).